Reading from the N-terminus, the 343-residue chain is GTP 3',8-cyclase (343 aa).

Positions 19 to 244 (PFGRNISYLR…TDLDDSTGGP (226 aa)) constitute a Radical SAM core domain. Arg-28 provides a ligand contact to GTP. 2 residues coordinate [4Fe-4S] cluster: Cys-35 and Cys-39. Tyr-41 serves as a coordination point for S-adenosyl-L-methionine. A [4Fe-4S] cluster-binding site is contributed by Cys-42. Arg-77 is a GTP binding site. Residue Gly-81 coordinates S-adenosyl-L-methionine. A GTP-binding site is contributed by Thr-111. Ser-135 provides a ligand contact to S-adenosyl-L-methionine. A GTP-binding site is contributed by Lys-171. S-adenosyl-L-methionine is bound at residue Met-205. Residues Cys-268 and Cys-271 each contribute to the [4Fe-4S] cluster site. 273–275 (RVR) serves as a coordination point for GTP. Cys-285 lines the [4Fe-4S] cluster pocket.

This sequence belongs to the radical SAM superfamily. MoaA family. Monomer and homodimer. [4Fe-4S] cluster is required as a cofactor.

The catalysed reaction is GTP + AH2 + S-adenosyl-L-methionine = (8S)-3',8-cyclo-7,8-dihydroguanosine 5'-triphosphate + 5'-deoxyadenosine + L-methionine + A + H(+). The protein operates within cofactor biosynthesis; molybdopterin biosynthesis. Catalyzes the cyclization of GTP to (8S)-3',8-cyclo-7,8-dihydroguanosine 5'-triphosphate. The chain is GTP 3',8-cyclase from Nitrobacter winogradskyi (strain ATCC 25391 / DSM 10237 / CIP 104748 / NCIMB 11846 / Nb-255).